The chain runs to 347 residues: D-alanine--D-alanine ligase (347 aa).

The 202-residue stretch at 138–339 (KILCSHAGIP…YSQVIETILA (202 aa)) folds into the ATP-grasp domain. 171 to 226 (SDRFTFPLFVKPVDAGSSFGCTFVDFFEQLPVAIEHALQHGKSAIVEPALDAPEVF) is an ATP binding site. Aspartate 296, glutamate 308, and asparagine 310 together coordinate Mg(2+).

The protein belongs to the D-alanine--D-alanine ligase family. Mg(2+) is required as a cofactor. Requires Mn(2+) as cofactor.

Its subcellular location is the cytoplasm. The catalysed reaction is 2 D-alanine + ATP = D-alanyl-D-alanine + ADP + phosphate + H(+). It functions in the pathway cell wall biogenesis; peptidoglycan biosynthesis. In terms of biological role, cell wall formation. This is D-alanine--D-alanine ligase from Tropheryma whipplei (strain TW08/27) (Whipple's bacillus).